We begin with the raw amino-acid sequence, 381 residues long: Dihydroorotate dehydrogenase (quinone) (381 aa).

FMN contacts are provided by residues 77–81 (AGCDK) and Ala-101. Lys-81 contributes to the substrate binding site. Position 126-129 (126-129 (NRLG)) interacts with substrate. Residues Asn-158 and Asn-191 each contribute to the FMN site. A substrate-binding site is contributed by Asn-191. Ser-194 (nucleophile) is an active-site residue. Asn-196 contacts substrate. Residues Lys-229 and Thr-257 each contribute to the FMN site. 258 to 259 (NT) contributes to the substrate binding site. FMN-binding positions include Gly-287, Gly-316, and 337-338 (YT).

It belongs to the dihydroorotate dehydrogenase family. Type 2 subfamily. Monomer. The cofactor is FMN.

It is found in the cell membrane. The catalysed reaction is (S)-dihydroorotate + a quinone = orotate + a quinol. It participates in pyrimidine metabolism; UMP biosynthesis via de novo pathway; orotate from (S)-dihydroorotate (quinone route): step 1/1. Functionally, catalyzes the conversion of dihydroorotate to orotate with quinone as electron acceptor. The sequence is that of Dihydroorotate dehydrogenase (quinone) (pyrD) from Synechocystis sp. (strain ATCC 27184 / PCC 6803 / Kazusa).